Here is a 252-residue protein sequence, read N- to C-terminus: 3-deoxy-manno-octulosonate cytidylyltransferase (252 aa).

Belongs to the KdsB family.

It localises to the cytoplasm. The enzyme catalyses 3-deoxy-alpha-D-manno-oct-2-ulosonate + CTP = CMP-3-deoxy-beta-D-manno-octulosonate + diphosphate. The protein operates within nucleotide-sugar biosynthesis; CMP-3-deoxy-D-manno-octulosonate biosynthesis; CMP-3-deoxy-D-manno-octulosonate from 3-deoxy-D-manno-octulosonate and CTP: step 1/1. Its pathway is bacterial outer membrane biogenesis; lipopolysaccharide biosynthesis. Its function is as follows. Activates KDO (a required 8-carbon sugar) for incorporation into bacterial lipopolysaccharide in Gram-negative bacteria. This Vibrio cholerae serotype O1 (strain ATCC 39315 / El Tor Inaba N16961) protein is 3-deoxy-manno-octulosonate cytidylyltransferase.